The following is a 28-amino-acid chain: Ranatuerin-2AVa (28 aa).

Cysteine 23 and cysteine 28 form a disulfide bridge.

Expressed by the skin glands.

It is found in the secreted. Its function is as follows. Has antibacterial activity against the Gram positive bacterium L.lactis. This Rana arvalis (Moor frog) protein is Ranatuerin-2AVa.